The primary structure comprises 185 residues: Ribosome-recycling factor (185 aa).

The protein belongs to the RRF family.

The protein resides in the cytoplasm. Its function is as follows. Responsible for the release of ribosomes from messenger RNA at the termination of protein biosynthesis. May increase the efficiency of translation by recycling ribosomes from one round of translation to another. The sequence is that of Ribosome-recycling factor from Thermomicrobium roseum (strain ATCC 27502 / DSM 5159 / P-2).